The following is a 308-amino-acid chain: MKPKIFIDGEHGTTGLQIRARMAGRSDLELLSIPEAERRNAALREDLLNGADIAILCLPDDASREAVAMVAGNNRVRIIDTSTAHRVAPDWAYGFAEMDKAQPAKIRDARHVSNPGCYPTGAIGVIRPLRQAGILPDGYPVTVNAVSGYTGGGKQMIAQIEDENHADHISAPHFLYGLPLKHKHVPEMKMHGMLERAPIFSPSVGKFPQGMIVQVPLYLDDLAPGATLESIHAALVEHYAGQSIVEVVPLSAQLARIDATELAGKDTMKLFVFGTPGGAHVNLVALLDNLGKGASGAAVQNMDLMLSA.

C117 is an active-site residue.

The protein belongs to the NAGSA dehydrogenase family. Type 2 subfamily.

It localises to the cytoplasm. The catalysed reaction is N-acetyl-L-glutamate 5-semialdehyde + phosphate + NADP(+) = N-acetyl-L-glutamyl 5-phosphate + NADPH + H(+). It functions in the pathway amino-acid biosynthesis; L-arginine biosynthesis; N(2)-acetyl-L-ornithine from L-glutamate: step 3/4. In terms of biological role, catalyzes the NADPH-dependent reduction of N-acetyl-5-glutamyl phosphate to yield N-acetyl-L-glutamate 5-semialdehyde. In Sinorhizobium fredii (strain NBRC 101917 / NGR234), this protein is N-acetyl-gamma-glutamyl-phosphate reductase.